We begin with the raw amino-acid sequence, 965 residues long: Glycine dehydrogenase (decarboxylating) 1 (965 aa).

Lysine 713 is subject to N6-(pyridoxal phosphate)lysine.

Belongs to the GcvP family. In terms of assembly, the glycine cleavage system is composed of four proteins: P, T, L and H. It depends on pyridoxal 5'-phosphate as a cofactor.

It carries out the reaction N(6)-[(R)-lipoyl]-L-lysyl-[glycine-cleavage complex H protein] + glycine + H(+) = N(6)-[(R)-S(8)-aminomethyldihydrolipoyl]-L-lysyl-[glycine-cleavage complex H protein] + CO2. Functionally, the glycine cleavage system catalyzes the degradation of glycine. The P protein binds the alpha-amino group of glycine through its pyridoxal phosphate cofactor; CO(2) is released and the remaining methylamine moiety is then transferred to the lipoamide cofactor of the H protein. In Colwellia psychrerythraea (strain 34H / ATCC BAA-681) (Vibrio psychroerythus), this protein is Glycine dehydrogenase (decarboxylating) 1.